A 141-amino-acid chain; its full sequence is Auxin-responsive protein SAUR62 (141 aa).

Belongs to the ARG7 family. Expressed in stamen filaments and petals.

Its subcellular location is the cell membrane. In terms of biological role, may promote auxin-stimulated organ elongation, such as hypocotyls, stamen filaments and petals. The chain is Auxin-responsive protein SAUR62 from Arabidopsis thaliana (Mouse-ear cress).